A 1031-amino-acid polypeptide reads, in one-letter code: Translation initiation factor IF-2 (1031 aa).

2 disordered regions span residues 33–369 and 388–436; these read KSHS…GDVL and LKPL…AESL. Positions 45–56 are enriched in basic and acidic residues; that stretch reads ELVRSKLSEPRV. Residues 96–105 are compositionally biased toward low complexity; that stretch reads PAPAQQQAAA. Polar residues predominate over residues 108-123; sequence ASSSKPSPQRPDQLSS. The span at 148–171 shows a compositional bias: low complexity; it reads PAAQEPQPAAASTRPEAAAKAGSP. Residues 184-200 are compositionally biased toward pro residues; that stretch reads VLPPPRRAASGPEPPQR. Positions 250–281 are enriched in basic and acidic residues; the sequence is TRPEPRSPVAKKEESSDSGKADEAPRPQRRLE. Residues 286–299 show a composition bias toward pro residues; the sequence is PTRPVAKPLPPEPD. Positions 419–435 are enriched in low complexity; the sequence is RPSASAEATAPEAAAES. A tr-type G domain is found at 522–695; the sequence is PRPPVVTIMG…LLVADVAELQ (174 aa). The G1 stretch occupies residues 531–538; sequence GHVDHGKT. GTP is bound at residue 531–538; sequence GHVDHGKT. Residues 556–560 are G2; it reads GITQR. Residues 581–584 are G3; the sequence is DTPG. GTP is bound by residues 581 to 585 and 635 to 638; these read DTPGH and NKID. A G4 region spans residues 635–638; it reads NKID. The tract at residues 671–673 is G5; the sequence is SAL.

It belongs to the TRAFAC class translation factor GTPase superfamily. Classic translation factor GTPase family. IF-2 subfamily.

It localises to the cytoplasm. One of the essential components for the initiation of protein synthesis. Protects formylmethionyl-tRNA from spontaneous hydrolysis and promotes its binding to the 30S ribosomal subunits. Also involved in the hydrolysis of GTP during the formation of the 70S ribosomal complex. This is Translation initiation factor IF-2 from Synechococcus sp. (strain JA-3-3Ab) (Cyanobacteria bacterium Yellowstone A-Prime).